We begin with the raw amino-acid sequence, 581 residues long: Kelch-like protein 38 (581 aa).

A BTB domain is found at 34 to 101 (TDVSICAGAR…VYTGEAHIAT (68 aa)). Residues 136-237 (CLGMIRLSEI…HPAFFHHFIA (102 aa)) enclose the BACK domain. 6 Kelch repeats span residues 285-332 (FLIL…TLHR), 334-383 (IYVL…AHKN), 384-431 (FIFS…VKDQ), 433-479 (LYLF…VLGE), 480-521 (RIVI…VMGN), and 523-573 (LYVT…TLQC).

In Homo sapiens (Human), this protein is Kelch-like protein 38 (KLHL38).